A 217-amino-acid polypeptide reads, in one-letter code: Small ribosomal subunit protein uS3c (217 aa).

The KH type-2 domain occupies 47–118 (IQKHVKSVSN…NLRVTLTGVI (72 aa)).

The protein belongs to the universal ribosomal protein uS3 family. Part of the 30S ribosomal subunit.

Its subcellular location is the plastid. It is found in the chloroplast. This Adiantum capillus-veneris (Maidenhair fern) protein is Small ribosomal subunit protein uS3c (rps3).